The following is a 296-amino-acid chain: MNSPFHNIGIVTRPNTPDIQDTAHTLITFLKQHGFTVYLDEVGVRECCIYTQDTDGCHIVNKTELGQYCDLVAVLGGDGTFLSAAREITPRAVPIIGINQGHLGFLTQIPREYMTDKLLPVLEGKYLAEERILIEAALIREGKTAERALALNDAVLSRGGAGQMIEFEVFVNQEFVYTQRSDGLIVSTPTGSTAYSLAAGGPIMQAGLHAFTLVPICPQSMTNRPIAIPDTSEIEILVTQGGDARVHFDGQSFIDVQNLDRIIIRRYHNPLRILHPTDYQYFKTLRQKLHWGEQLV.

Aspartate 78 serves as the catalytic Proton acceptor. NAD(+) contacts are provided by residues 78–79 (DG), 152–153 (ND), arginine 180, aspartate 182, and glutamine 251.

This sequence belongs to the NAD kinase family. The cofactor is a divalent metal cation.

It is found in the cytoplasm. The enzyme catalyses NAD(+) + ATP = ADP + NADP(+) + H(+). In terms of biological role, involved in the regulation of the intracellular balance of NAD and NADP, and is a key enzyme in the biosynthesis of NADP. Catalyzes specifically the phosphorylation on 2'-hydroxyl of the adenosine moiety of NAD to yield NADP. The chain is NAD kinase from Neisseria gonorrhoeae (strain ATCC 700825 / FA 1090).